The primary structure comprises 357 residues: MSTNPIQPLLDVLYQGKSLSREQTAELFSALIRGEMSEAAMAGMLVALKMRGETIDEISGAADAMRAAAKPFPCPERNNNPLHNGIVDIVGTGGDGFNTINISTTAAFVAAAAGAKVAKHGNRSVSSKSGSSDLLAQFGIDLTMSPETASRCLDALNLCFLFAPHYHGGVKHAVPVRQALKTRTLFNVLGPLINPARPEFMLLGVYSPELVLPIAKVLKALGTKRAMVVHGSGLDEVALHGNTQVAELKDGDIIEYQLTPADLGVPLAQISDLEGGEPAQNALITEAILKGNGTEAHANAVAINAGCALYVCGITDSVKAGTLLALATIQSGKAFELLSQLAKVSGEAHVNGQERGR.

5-phospho-alpha-D-ribose 1-diphosphate-binding positions include G91, 94–95, T99, 101–104, 119–127, and S131; these read GD, NIST, and KHGNRSVSS. G91 serves as a coordination point for anthranilate. Residue S103 coordinates Mg(2+). N122 lines the anthranilate pocket. An anthranilate-binding site is contributed by R177. Positions 235 and 236 each coordinate Mg(2+).

Belongs to the anthranilate phosphoribosyltransferase family. In terms of assembly, homodimer. The cofactor is Mg(2+).

The enzyme catalyses N-(5-phospho-beta-D-ribosyl)anthranilate + diphosphate = 5-phospho-alpha-D-ribose 1-diphosphate + anthranilate. The protein operates within amino-acid biosynthesis; L-tryptophan biosynthesis; L-tryptophan from chorismate: step 2/5. In terms of biological role, catalyzes the transfer of the phosphoribosyl group of 5-phosphorylribose-1-pyrophosphate (PRPP) to anthranilate to yield N-(5'-phosphoribosyl)-anthranilate (PRA). The polypeptide is Anthranilate phosphoribosyltransferase (Shewanella baltica (strain OS195)).